Reading from the N-terminus, the 227-residue chain is Enolase-phosphatase E1 (227 aa).

The protein belongs to the HAD-like hydrolase superfamily. MasA/MtnC family. Monomer. Requires Mg(2+) as cofactor.

The catalysed reaction is 5-methylsulfanyl-2,3-dioxopentyl phosphate + H2O = 1,2-dihydroxy-5-(methylsulfanyl)pent-1-en-3-one + phosphate. The protein operates within amino-acid biosynthesis; L-methionine biosynthesis via salvage pathway; L-methionine from S-methyl-5-thio-alpha-D-ribose 1-phosphate: step 3/6. It functions in the pathway amino-acid biosynthesis; L-methionine biosynthesis via salvage pathway; L-methionine from S-methyl-5-thio-alpha-D-ribose 1-phosphate: step 4/6. Functionally, bifunctional enzyme that catalyzes the enolization of 2,3-diketo-5-methylthiopentyl-1-phosphate (DK-MTP-1-P) into the intermediate 2-hydroxy-3-keto-5-methylthiopentenyl-1-phosphate (HK-MTPenyl-1-P), which is then dephosphorylated to form the acireductone 1,2-dihydroxy-3-keto-5-methylthiopentene (DHK-MTPene). This is Enolase-phosphatase E1 from Pseudomonas syringae pv. syringae (strain B728a).